The following is a 173-amino-acid chain: Pyrimidine operon regulatory protein (173 aa).

Substrate contacts are provided by residues 40–41 (TR), 97–105 (DDVLYTGRT), and Arg-130. Positions 93–105 (VILVDDVLYTGRT) match the PRPP-binding motif.

The protein belongs to the purine/pyrimidine phosphoribosyltransferase family. PyrR subfamily.

Functionally, regulates transcriptional attenuation of the pyrimidine nucleotide (pyr) operon in response to exogenous pyrimidines, probably by binding to specific sites on pyr mRNA. This probably disrupts an antiterminator hairpin in the RNA and favors formation of a downstream transcription terminator, leading to a reduced expression of downstream genes. This Lactococcus lactis subsp. lactis (strain IL1403) (Streptococcus lactis) protein is Pyrimidine operon regulatory protein.